The following is a 62-amino-acid chain: Conotoxin Pn-B0151 (62 aa).

A signal peptide spans 1-22 (MRCLPVFVILLLLIASTPSVDA). Residues 23–48 (LQKTKDDMPLASFHDNVKRILQTLSN) constitute a propeptide that is removed on maturation.

Belongs to the conotoxin T superfamily. In terms of processing, contains 2 disulfide bonds that can be either 'C1-C3, C2-C4' or 'C1-C4, C2-C3', since these disulfide connectivities have been observed for conotoxins with cysteine framework V (for examples, see AC P0DQQ7 and AC P81755). In terms of tissue distribution, expressed by the venom duct.

Its subcellular location is the secreted. The polypeptide is Conotoxin Pn-B0151 (Conus pennaceus (Feathered cone)).